The chain runs to 257 residues: MDETNGRRETHDFMNVNVESFSQLPFIRRTPPKEKAAIIRLFGQELVGDNSDNLSAEPSDHQTTTKNDESSENIKDKDKEKDKDKDKDNNNNRRFECHYCFRNFPTSQALGGHQNAHKRERQHAKRGSMTSYLHHHQPHDPHHIYGFLNNHHHRHYPSWTTEARSYYGGGGHQTPSYYSRNTLAPPSSNPPTINGSPLGLWRVPPSTSTNTIQGVYSSSPASAFRSHEQETNKEPNNWPYRLMKPNVQDHVSLDLHL.

Disordered stretches follow at residues 48–92, 108–128, and 214–238; these read GDNS…NNNN, QALG…KRGS, and GVYS…PNNW. Residues 50 to 65 are compositionally biased toward polar residues; that stretch reads NSDNLSAEPSDHQTTT. Over residues 66–92 the composition is skewed to basic and acidic residues; it reads KNDESSENIKDKDKEKDKDKDKDNNNN. The C2H2-type zinc finger occupies 95–117; it reads FECHYCFRNFPTSQALGGHQNAH. The segment covering 115-126 has biased composition (basic residues); that stretch reads NAHKRERQHAKR.

As to expression, expressed in developing cauline leaves.

It is found in the nucleus. In terms of biological role, probable transcription factor required for the initiation of inflorescence trichomes in response to gibberellin and cytokinin. Is not involved in the regulation of trichome branching. Is functionally equivalent to GIS2. Acts as a negative regulator of abscisic acid (ABA) signaling during germination and early seedling development. The chain is Zinc finger protein 8 from Arabidopsis thaliana (Mouse-ear cress).